The chain runs to 479 residues: mRNA export factor ICP27 homolog (479 aa).

A compositionally biased stretch (low complexity) spans 1 to 15 (MVPSQRLSRTSSISS). Disordered regions lie at residues 1-77 (MVPS…PSSV) and 91-210 (KKWD…NKPW). Residues 35–44 (TDCDLDPMEG) show a composition bias toward acidic residues. A nuclear export signal and interaction with host NXF1 region spans residues 61–146 (DEDPTPAHAI…TDESYGKRRH (86 aa)). The nuclear localization signal stretch occupies residues 127–130 (KRRR). Over residues 132 to 142 (EVHGCTDESYG) the composition is skewed to basic and acidic residues. Residues 143 to 145 (KRR) are nuclear localization signal. Zn(2+) contacts are provided by Cys-354, His-445, Cys-449, and Cys-454. Residues 354-454 (CFLPNTRDYN…HTRDCRSASC (101 aa)) form a CHC2-type zinc finger.

Belongs to the HHV-1 ICP27 protein family. In terms of assembly, interacts with host XPO1 and with the XPO1 export pathway components small GTPase RAN and nucleoporin NUP214. Interacts with host SPEN, OTT1 and OTT3. Interacts with host SRSF1, SRSF3, SRSF7 and SRPK1. Interacts with host DHX9; this interaction may have an inhibitory effect on virion production. Interacts (via N-terminus) with host NXF1; this interaction plays a role in mRNA export. Phosphorylated by cellular protein kinase CK2.

The protein localises to the host nucleus. It localises to the host cytoplasm. In terms of biological role, promotes the nuclear export of a subset of early and late viral mRNAs by interacting with mRNAs and cellular export proteins. Additionally may prevent the establishment of cellular antiviral state, by acting as an alternative splicing factor for cellular RNAs such as STAT1, resulting in a STAT1 mRNA incapable of producing the STAT1alpha isoform. This is mRNA export factor ICP27 homolog from Homo sapiens (Human).